The sequence spans 261 residues: Cytochrome c oxidase subunit 3 (261 aa).

Over 1 to 15 (MAHQAHAYHMVDPSP) the chain is Mitochondrial matrix. A helical membrane pass occupies residues 16–34 (WPLTGAIAALLLTSGTAVW). The Mitochondrial intermembrane segment spans residues 35–40 (FHFHSL). A helical transmembrane segment spans residues 41 to 66 (TLLTLGNVLLLLTMYQWWRDIIREGT). Residues 67–72 (FQGHHT) lie on the Mitochondrial matrix side of the membrane. The chain crosses the membrane as a helical span at residues 73-105 (PPVQKGLRYGMILFITSEVFFFLGFFWAFYHAS). Residues 106–128 (LAPTPELGGCWPPTGITTLDPFE) lie on the Mitochondrial intermembrane side of the membrane. Residues 129-152 (VPLLNTAVLLASGVTVTWAHHSIM) form a helical membrane-spanning segment. The Mitochondrial matrix portion of the chain corresponds to 153–155 (EGE). A helical transmembrane segment spans residues 156 to 183 (RKQTIQALTLTILLGFYFTFLQGMEYYE). The Mitochondrial intermembrane portion of the chain corresponds to 184–190 (APFTIAD). Residues 191–223 (GVYGSTFFVATGFHGLHVIIGSTFLAVCLLRQV) traverse the membrane as a helical segment. Topologically, residues 224 to 232 (QYHFTSEHH) are mitochondrial matrix. The helical transmembrane segment at 233–256 (FGFEAAAWYWHFVDVVWLFLYVSI) threads the bilayer. The Mitochondrial intermembrane portion of the chain corresponds to 257–261 (YWWGS).

Belongs to the cytochrome c oxidase subunit 3 family. In terms of assembly, component of the cytochrome c oxidase (complex IV, CIV), a multisubunit enzyme composed of 14 subunits. The complex is composed of a catalytic core of 3 subunits MT-CO1, MT-CO2 and MT-CO3, encoded in the mitochondrial DNA, and 11 supernumerary subunits COX4I, COX5A, COX5B, COX6A, COX6B, COX6C, COX7A, COX7B, COX7C, COX8 and NDUFA4, which are encoded in the nuclear genome. The complex exists as a monomer or a dimer and forms supercomplexes (SCs) in the inner mitochondrial membrane with NADH-ubiquinone oxidoreductase (complex I, CI) and ubiquinol-cytochrome c oxidoreductase (cytochrome b-c1 complex, complex III, CIII), resulting in different assemblies (supercomplex SCI(1)III(2)IV(1) and megacomplex MCI(2)III(2)IV(2)).

The protein localises to the mitochondrion inner membrane. It carries out the reaction 4 Fe(II)-[cytochrome c] + O2 + 8 H(+)(in) = 4 Fe(III)-[cytochrome c] + 2 H2O + 4 H(+)(out). Component of the cytochrome c oxidase, the last enzyme in the mitochondrial electron transport chain which drives oxidative phosphorylation. The respiratory chain contains 3 multisubunit complexes succinate dehydrogenase (complex II, CII), ubiquinol-cytochrome c oxidoreductase (cytochrome b-c1 complex, complex III, CIII) and cytochrome c oxidase (complex IV, CIV), that cooperate to transfer electrons derived from NADH and succinate to molecular oxygen, creating an electrochemical gradient over the inner membrane that drives transmembrane transport and the ATP synthase. Cytochrome c oxidase is the component of the respiratory chain that catalyzes the reduction of oxygen to water. Electrons originating from reduced cytochrome c in the intermembrane space (IMS) are transferred via the dinuclear copper A center (CU(A)) of subunit 2 and heme A of subunit 1 to the active site in subunit 1, a binuclear center (BNC) formed by heme A3 and copper B (CU(B)). The BNC reduces molecular oxygen to 2 water molecules using 4 electrons from cytochrome c in the IMS and 4 protons from the mitochondrial matrix. This chain is Cytochrome c oxidase subunit 3 (mt-co3), found in Oncorhynchus masou (Cherry salmon).